A 287-amino-acid chain; its full sequence is Genetic interactor of prohibitin 7, mitochondrial (287 aa).

The N-terminal 24 residues, 1–24 (MVLSNVKIFRLKSHRAFRIGPMIK), are a transit peptide targeting the mitochondrion. The helical transmembrane segment at 250–266 (SKAIISFVVFVSIYVWL) threads the bilayer.

It belongs to the GEP7 family.

Its subcellular location is the mitochondrion membrane. In terms of biological role, involved in respiratory growth and required for cell survival in the absence of prohibitins or GEM1. This Saccharomyces cerevisiae (strain YJM789) (Baker's yeast) protein is Genetic interactor of prohibitin 7, mitochondrial (GEP7).